We begin with the raw amino-acid sequence, 688 residues long: DNA topoisomerase 1 (688 aa).

The Toprim domain occupies 3–113; sequence ENLVIVESPA…TENRVVFNEI (111 aa). Glu-9 and Asp-82 together coordinate Mg(2+). Positions 129–556 constitute a Topo IA-type catalytic domain; sequence EMELVDAQQA…FYSSFKQDVE (428 aa). Residues 163-168 form an interaction with DNA region; the sequence is SAGRVQ. Tyr-298 (O-(5'-phospho-DNA)-tyrosine intermediate) is an active-site residue. Residues 322-349 are disordered; it reads YGNDYTSNRKSKGQGDQDAHEAIRPSST. Positions 334–344 are enriched in basic and acidic residues; it reads GQGDQDAHEAI. C4-type zinc fingers lie at residues 576 to 602, 616 to 644, and 657 to 680; these read CEVC…FPDC, CPKC…YPEC, and CPKC…CSNC.

The protein belongs to the type IA topoisomerase family. As to quaternary structure, monomer. Requires Mg(2+) as cofactor.

The catalysed reaction is ATP-independent breakage of single-stranded DNA, followed by passage and rejoining.. In terms of biological role, releases the supercoiling and torsional tension of DNA, which is introduced during the DNA replication and transcription, by transiently cleaving and rejoining one strand of the DNA duplex. Introduces a single-strand break via transesterification at a target site in duplex DNA. The scissile phosphodiester is attacked by the catalytic tyrosine of the enzyme, resulting in the formation of a DNA-(5'-phosphotyrosyl)-enzyme intermediate and the expulsion of a 3'-OH DNA strand. The free DNA strand then undergoes passage around the unbroken strand, thus removing DNA supercoils. Finally, in the religation step, the DNA 3'-OH attacks the covalent intermediate to expel the active-site tyrosine and restore the DNA phosphodiester backbone. The chain is DNA topoisomerase 1 from Staphylococcus saprophyticus subsp. saprophyticus (strain ATCC 15305 / DSM 20229 / NCIMB 8711 / NCTC 7292 / S-41).